Here is a 474-residue protein sequence, read N- to C-terminus: GTPase Der (474 aa).

EngA-type G domains lie at 2–166 and 212–385; these read LRIA…NVPE and LKIA…ETVS. GTP-binding positions include 8–15, 55–59, 118–121, 218–225, 265–269, and 330–333; these read GRPNVGKS, DTGGV, NKAD, DTAGL, and NKWD. Residues 386–470 enclose the KH-like domain; it reads SKVPTPVVNK…PFDLEFKEKT (85 aa).

Belongs to the TRAFAC class TrmE-Era-EngA-EngB-Septin-like GTPase superfamily. EngA (Der) GTPase family. In terms of assembly, associates with the 50S ribosomal subunit.

In terms of biological role, GTPase that plays an essential role in the late steps of ribosome biogenesis. This chain is GTPase Der, found in Chlamydia caviae (strain ATCC VR-813 / DSM 19441 / 03DC25 / GPIC) (Chlamydophila caviae).